Consider the following 419-residue polypeptide: MACARPLISVYSEKGESSGKNVTLPAVFKAPIRPDIVNFVHTNLRKNNRQPYAVSELAGHQTSAESWGTGRAVARIPRVRGGGTHRSGQGAFGNMCRGGRMFAPTKTWRRWHRRVNTTQKRYAICSALAASALPALVMSKGHRIEEVPELPLVVEDKVEGYKKTKEAVQLLKKLKAWNDIKKVYASQRMRAGKGKMRNRRRIQRRGPCIIYNEDNGIIKAFRNIPGITLLNVSKLNILKLAPGGHVGRFCIWTESAFRKLDELYGTWRKAASLKSNYNLPMHKMMNTDLSRILKSPEIQRALRAPRKKIHRRVLKKNPLKNLRIMLKLNPYAKTMRRNTILRQARNHKLRVKKLEAAATALATKSEKVVPEKGTADKKPAVGKKGKKVDAKKQKPAGKKVVAKKPAEKKPTTEEKKPAA.

Ala2 bears the N-acetylalanine mark. The residue at position 14 (Lys14) is an N6-acetyllysine. An Omega-N-methylarginine modification is found at Arg97. Lys106 carries the N6-acetyllysine modification. A Glycyl lysine isopeptide (Lys-Gly) (interchain with G-Cter in SUMO2) cross-link involves residue Lys239. The residue at position 259 (Lys259) is an N6-acetyllysine. Thr266 is subject to Phosphothreonine. A phosphoserine mark is found at Ser290 and Ser295. Residue Arg300 is modified to Citrulline. Residue Lys327 forms a Glycyl lysine isopeptide (Lys-Gly) (interchain with G-Cter in SUMO2) linkage. N6-acetyllysine is present on residues Lys333 and Lys353. Lys364 carries the N6-acetyllysine; alternate modification. Residue Lys364 forms a Glycyl lysine isopeptide (Lys-Gly) (interchain with G-Cter in SUMO1); alternate linkage. The segment covering 364-379 (KSEKVVPEKGTADKKP) has biased composition (basic and acidic residues). Positions 364–419 (KSEKVVPEKGTADKKPAVGKKGKKVDAKKQKPAGKKVVAKKPAEKKPTTEEKKPAA) are disordered. Position 365 is a phosphoserine (Ser365). The segment covering 393-402 (QKPAGKKVVA) has biased composition (basic residues). The segment covering 404-419 (KPAEKKPTTEEKKPAA) has biased composition (basic and acidic residues).

It belongs to the universal ribosomal protein uL4 family. As to quaternary structure, component of the large ribosomal subunit. May bind IPO9 with low affinity. Interacts with RBM3. In terms of processing, citrullinated by PADI4.

The protein localises to the cytoplasm. In terms of biological role, component of the large ribosomal subunit. The ribosome is a large ribonucleoprotein complex responsible for the synthesis of proteins in the cell. This is Large ribosomal subunit protein uL4 (Rpl4) from Mus musculus (Mouse).